Consider the following 322-residue polypeptide: Lymphokine-activated killer T-cell-originated protein kinase (322 aa).

Methionine 1 is subject to N-acetylmethionine. Residues threonine 9 and threonine 24 each carry the phosphothreonine modification. At serine 32 the chain carries Phosphoserine. In terms of domain architecture, Protein kinase spans 32-322; that stretch reads SPFMQKLGFG…HIVEALETDV (291 aa). 38–46 provides a ligand contact to ATP; it reads LGFGTGVNV. A Phosphoserine modification is found at serine 59. An ATP-binding site is contributed by lysine 64. The active-site Proton acceptor is the aspartate 167. Residue lysine 169 forms a Glycyl lysine isopeptide (Lys-Gly) (interchain with G-Cter in SUMO2) linkage. The interval 320-322 is PDZ-interaction; the sequence is TDV.

It belongs to the protein kinase superfamily. STE Ser/Thr protein kinase family. MAP kinase kinase subfamily. In terms of assembly, interacts with DLG1 and TP53. In terms of processing, phosphorylated; in a cell-cycle dependent manner at mitosis. In terms of tissue distribution, expressed in the testis and placenta. In the testis, restrictedly expressed in outer cell layer of seminiferous tubules.

The enzyme catalyses L-seryl-[protein] + ATP = O-phospho-L-seryl-[protein] + ADP + H(+). It catalyses the reaction L-threonyl-[protein] + ATP = O-phospho-L-threonyl-[protein] + ADP + H(+). It carries out the reaction L-tyrosyl-[protein] + ATP = O-phospho-L-tyrosyl-[protein] + ADP + H(+). Its activity is regulated as follows. Activated by phosphorylation. Its function is as follows. Phosphorylates MAP kinase p38. Seems to be active only in mitosis. May also play a role in the activation of lymphoid cells. When phosphorylated, forms a complex with TP53, leading to TP53 destabilization and attenuation of G2/M checkpoint during doxorubicin-induced DNA damage. This chain is Lymphokine-activated killer T-cell-originated protein kinase (PBK), found in Homo sapiens (Human).